Here is a 919-residue protein sequence, read N- to C-terminus: DNA-directed RNA polymerase 132 kDa polypeptide (919 aa).

The protein belongs to the RNA polymerase beta chain family. As to quaternary structure, the DNA-dependent RNA polymerase used for intermediate and late genes expression consists of eight subunits (147) kDa, (133) kDa, (35) kDa, (30) kDa, (22) kDa, (19) kDa, (18) kDa and (7) kDa totalling more than 500 kDa in mass. The same holoenzyme, with the addition of the transcription-specificity factor RAP94, is used for early gene expression.

It is found in the virion. The catalysed reaction is RNA(n) + a ribonucleoside 5'-triphosphate = RNA(n+1) + diphosphate. Part of the DNA-dependent RNA polymerase which catalyzes the transcription of viral DNA into RNA using the four ribonucleoside triphosphates as substrates. Responsible for the transcription of early, intermediate and late genes. DNA-dependent RNA polymerase associates with the early transcription factor (ETF), itself composed of D6 and A7, thereby allowing the early genes transcription. Late transcription, and probably also intermediate transcription, require newly synthesized RNA polymerase. This Sheeppox virus (strain KS-1) (SPPV) protein is DNA-directed RNA polymerase 132 kDa polypeptide (RPO132).